Consider the following 727-residue polypeptide: Probable metal-nicotianamine transporter YSL14 (727 aa).

Composition is skewed to low complexity over residues 1 to 10 and 18 to 27; these read MAQHTAAAAG and AEAAAAAAAG. The tract at residues 1-61 is disordered; that stretch reads MAQHTAAAAG…RNGGADDPDA (61 aa). The segment covering 45-54 has biased composition (gly residues); the sequence is AGGGGGGRNG. A run of 14 helical transmembrane segments spans residues 84–104, 107–127, 152–172, 194–214, 256–276, 314–334, 359–379, 432–452, 460–480, 492–512, 546–566, 604–624, 646–666, and 681–701; these read AFVV…KLNL, GIIP…VRLW, CVVS…LFGM, LGWM…ALVP, LGKY…YTAG, IVNV…WPLI, VFIS…KVLI, VAYG…PEIF, ILVA…GSGL, LAIF…LVGL, FISQ…VFWL, PENC…INLI, FYIG…LFVW, and VASG…ILAL.

This sequence belongs to the YSL (TC 2.A.67.2) family. In terms of tissue distribution, expressed in leaves and at low levels in roots.

It is found in the membrane. May be involved in the transport of nicotianamine-chelated metals. This chain is Probable metal-nicotianamine transporter YSL14 (YSL14), found in Oryza sativa subsp. japonica (Rice).